The sequence spans 514 residues: Membrane-bound lytic murein transglycosylase F (514 aa).

The signal sequence occupies residues 1-30; the sequence is MKKLKINYLFIGILTLLLAAALWPSIPWFG. The tract at residues 31 to 269 is non-LT domain; sequence KTENHVAAIQ…RIEEKYLGHG (239 aa). The LT domain stretch occupies residues 270–514; the sequence is DDFDYVDTRS…LFTPQKKEEK (245 aa). Glutamate 314 is a catalytic residue.

In the N-terminal section; belongs to the bacterial solute-binding protein 3 family. This sequence in the C-terminal section; belongs to the transglycosylase Slt family.

The protein localises to the cell outer membrane. It carries out the reaction Exolytic cleavage of the (1-&gt;4)-beta-glycosidic linkage between N-acetylmuramic acid (MurNAc) and N-acetylglucosamine (GlcNAc) residues in peptidoglycan, from either the reducing or the non-reducing ends of the peptidoglycan chains, with concomitant formation of a 1,6-anhydrobond in the MurNAc residue.. In terms of biological role, murein-degrading enzyme that degrades murein glycan strands and insoluble, high-molecular weight murein sacculi, with the concomitant formation of a 1,6-anhydromuramoyl product. Lytic transglycosylases (LTs) play an integral role in the metabolism of the peptidoglycan (PG) sacculus. Their lytic action creates space within the PG sacculus to allow for its expansion as well as for the insertion of various structures such as secretion systems and flagella. The sequence is that of Membrane-bound lytic murein transglycosylase F from Salmonella arizonae (strain ATCC BAA-731 / CDC346-86 / RSK2980).